A 596-amino-acid chain; its full sequence is Malto-oligosyltrehalose trehalohydrolase (596 aa).

Arginine 263 to histidine 268 lines the substrate pocket. Residue aspartate 265 is the Nucleophile of the active site. Glutamate 302 serves as the catalytic Proton donor. Substrate-binding positions include aspartate 327–histidine 331 and histidine 397–asparagine 402.

Belongs to the glycosyl hydrolase 13 family.

Its subcellular location is the cytoplasm. It catalyses the reaction hydrolysis of (1-&gt;4)-alpha-D-glucosidic linkage in 4-alpha-D-[(1-&gt;4)-alpha-D-glucanosyl]n trehalose to yield trehalose and (1-&gt;4)-alpha-D-glucan.. The protein operates within glycan biosynthesis; trehalose biosynthesis. This chain is Malto-oligosyltrehalose trehalohydrolase (treZ), found in Rhizobium sp. (strain M-11).